The primary structure comprises 701 residues: Elongation factor G 1 (701 aa).

In terms of domain architecture, tr-type G spans E8–L290. Residues A17 to T24, D88 to H92, and N142 to D145 each bind GTP.

This sequence belongs to the TRAFAC class translation factor GTPase superfamily. Classic translation factor GTPase family. EF-G/EF-2 subfamily.

The protein resides in the cytoplasm. Functionally, catalyzes the GTP-dependent ribosomal translocation step during translation elongation. During this step, the ribosome changes from the pre-translocational (PRE) to the post-translocational (POST) state as the newly formed A-site-bound peptidyl-tRNA and P-site-bound deacylated tRNA move to the P and E sites, respectively. Catalyzes the coordinated movement of the two tRNA molecules, the mRNA and conformational changes in the ribosome. The chain is Elongation factor G 1 from Paraburkholderia xenovorans (strain LB400).